A 32-amino-acid chain; its full sequence is Delta-actitoxin-Eqd1a (32 aa).

The protein belongs to the sea anemone short toxin (type III) family. Contains 4 disulfide bonds.

It is found in the secreted. The protein resides in the nematocyst. In terms of biological role, binds specifically to sodium channels (Nav) of the axonal membrane of crayfish and prolongs the falling phase of the action potential. It also increases the maximum rates of rise of both action potential and resting potential. Is only active on crustaceans. The polypeptide is Delta-actitoxin-Eqd1a (Entacmaea quadricolor (Bubble-tip anemone)).